The primary structure comprises 314 residues: tRNA dimethylallyltransferase (314 aa).

11 to 18 (GPTASGKT) contributes to the ATP binding site. 13-18 (TASGKT) provides a ligand contact to substrate. Interaction with substrate tRNA stretches follow at residues 36–39 (DSAL), 160–164 (QRINR), 241–246 (RCVGYR), and 274–281 (KRQITWLR).

The protein belongs to the IPP transferase family. In terms of assembly, monomer. Requires Mg(2+) as cofactor.

It carries out the reaction adenosine(37) in tRNA + dimethylallyl diphosphate = N(6)-dimethylallyladenosine(37) in tRNA + diphosphate. Its function is as follows. Catalyzes the transfer of a dimethylallyl group onto the adenine at position 37 in tRNAs that read codons beginning with uridine, leading to the formation of N6-(dimethylallyl)adenosine (i(6)A). The polypeptide is tRNA dimethylallyltransferase (Glaesserella parasuis serovar 5 (strain SH0165) (Haemophilus parasuis)).